Consider the following 123-residue polypeptide: MIQPQTLLNVADNSGARKLMCIRVIGTAGNQRYARIGDVIVAVIKDAVPQMPLERSEVIRAVIVRTCKEFKCEDGIIIRYDDNAAVIIDQKGNPKGTRVFGAITEELRELNFTKIVSLAPEVL.

This sequence belongs to the universal ribosomal protein uL14 family. Part of the 50S ribosomal subunit.

The protein resides in the plastid. It localises to the chloroplast. Functionally, binds to 23S rRNA. This Brachypodium distachyon (Purple false brome) protein is Large ribosomal subunit protein uL14c.